A 181-amino-acid chain; its full sequence is Large ribosomal subunit protein uL6 (181 aa).

It belongs to the universal ribosomal protein uL6 family. As to quaternary structure, part of the 50S ribosomal subunit.

Its function is as follows. This protein binds to the 23S rRNA, and is important in its secondary structure. It is located near the subunit interface in the base of the L7/L12 stalk, and near the tRNA binding site of the peptidyltransferase center. This is Large ribosomal subunit protein uL6 from Synechococcus sp. (strain JA-3-3Ab) (Cyanobacteria bacterium Yellowstone A-Prime).